The primary structure comprises 314 residues: MPSRPPLTVLLASPRGFCAGVDRAIQIVERAIEKYGAPVYVRHEIVHNRHVVERLKALGAVFVEELDQAPDDRPVVFSAHGVPKSVPAAAKSRRMLYLDATCPLVSKVHVEAQRHFDAGREIVLIGHAGHPEVVGTMGQLPEGAVALIETVADAMAFQPRDPANVAFVTQTTLSVDDTAEIVEALRARFPAIAAPHKEDICYATTNRQEAVKAIAAKAQVLVVLGSANSSNSVRLAEVGRRAGARAYLIDDAEGLDFTWLEGVETVGVTAGASAPEVLVQGVLDRLAERFEVTLTEADTARETVTFKLPRALAG.

[4Fe-4S] cluster is bound at residue cysteine 18. (2E)-4-hydroxy-3-methylbut-2-enyl diphosphate-binding residues include histidine 47 and histidine 80. The dimethylallyl diphosphate site is built by histidine 47 and histidine 80. Positions 47 and 80 each coordinate isopentenyl diphosphate. Residue cysteine 102 participates in [4Fe-4S] cluster binding. Residue histidine 130 participates in (2E)-4-hydroxy-3-methylbut-2-enyl diphosphate binding. Histidine 130 serves as a coordination point for dimethylallyl diphosphate. An isopentenyl diphosphate-binding site is contributed by histidine 130. Glutamate 132 serves as the catalytic Proton donor. Threonine 171 contacts (2E)-4-hydroxy-3-methylbut-2-enyl diphosphate. Cysteine 201 is a [4Fe-4S] cluster binding site. Positions 229, 230, 231, and 273 each coordinate (2E)-4-hydroxy-3-methylbut-2-enyl diphosphate. Serine 229, serine 230, asparagine 231, and serine 273 together coordinate dimethylallyl diphosphate. Isopentenyl diphosphate contacts are provided by serine 229, serine 230, asparagine 231, and serine 273.

This sequence belongs to the IspH family. The cofactor is [4Fe-4S] cluster.

The enzyme catalyses isopentenyl diphosphate + 2 oxidized [2Fe-2S]-[ferredoxin] + H2O = (2E)-4-hydroxy-3-methylbut-2-enyl diphosphate + 2 reduced [2Fe-2S]-[ferredoxin] + 2 H(+). It catalyses the reaction dimethylallyl diphosphate + 2 oxidized [2Fe-2S]-[ferredoxin] + H2O = (2E)-4-hydroxy-3-methylbut-2-enyl diphosphate + 2 reduced [2Fe-2S]-[ferredoxin] + 2 H(+). It functions in the pathway isoprenoid biosynthesis; dimethylallyl diphosphate biosynthesis; dimethylallyl diphosphate from (2E)-4-hydroxy-3-methylbutenyl diphosphate: step 1/1. It participates in isoprenoid biosynthesis; isopentenyl diphosphate biosynthesis via DXP pathway; isopentenyl diphosphate from 1-deoxy-D-xylulose 5-phosphate: step 6/6. Catalyzes the conversion of 1-hydroxy-2-methyl-2-(E)-butenyl 4-diphosphate (HMBPP) into a mixture of isopentenyl diphosphate (IPP) and dimethylallyl diphosphate (DMAPP). Acts in the terminal step of the DOXP/MEP pathway for isoprenoid precursor biosynthesis. The chain is 4-hydroxy-3-methylbut-2-enyl diphosphate reductase from Phenylobacterium zucineum (strain HLK1).